The chain runs to 345 residues: Anthranilate phosphoribosyltransferase (345 aa).

5-phospho-alpha-D-ribose 1-diphosphate is bound by residues G83, 86–87, T91, 93–96, 111–119, and S123; these read GD, NIST, and KHGNRNLSS. Residue G83 coordinates anthranilate. S95 lines the Mg(2+) pocket. N114 contributes to the anthranilate binding site. R169 provides a ligand contact to anthranilate. Mg(2+) is bound by residues D228 and E229.

The protein belongs to the anthranilate phosphoribosyltransferase family. As to quaternary structure, homodimer. Mg(2+) serves as cofactor.

The enzyme catalyses N-(5-phospho-beta-D-ribosyl)anthranilate + diphosphate = 5-phospho-alpha-D-ribose 1-diphosphate + anthranilate. Its pathway is amino-acid biosynthesis; L-tryptophan biosynthesis; L-tryptophan from chorismate: step 2/5. In terms of biological role, catalyzes the transfer of the phosphoribosyl group of 5-phosphorylribose-1-pyrophosphate (PRPP) to anthranilate to yield N-(5'-phosphoribosyl)-anthranilate (PRA). The protein is Anthranilate phosphoribosyltransferase of Paracoccus denitrificans (strain Pd 1222).